Here is a 541-residue protein sequence, read N- to C-terminus: Interleukin-18 receptor 1 (541 aa).

An N-terminal signal peptide occupies residues 1–18 (MNCRELPLTLWVLISVST). 2 disulfides stabilise this stretch: Cys22–Cys41 and Cys43–Cys81. Residues 22 to 329 (CTSRPHITVV…ADIPGHVFTR (308 aa)) lie on the Extracellular side of the membrane. Ig-like C2-type domains are found at residues 33-121 (GEPF…SCFT), 133-212 (KKFF…DRSN), and 220-312 (PKLN…KSFI). Residues Asn91, Asn102, Asn150, Asn197, Asn203, Asn236, Asn255, and Asn297 are each glycosylated (N-linked (GlcNAc...) asparagine). 2 cysteine pairs are disulfide-bonded: Cys119-Cys158 and Cys140-Cys185. A disulfide bond links Cys237 and Cys298. The helical transmembrane segment at 330 to 350 (GMIIAVLILVAVVCLVTVCVI) threads the bilayer. Residues 351 to 541 (YRVDLVLFYR…PEVLPVLSES (191 aa)) lie on the Cytoplasmic side of the membrane. The TIR domain maps to 373–520 (KTYDAFVSYL…RFWKNLLYLM (148 aa)). Glu455 is a catalytic residue.

This sequence belongs to the interleukin-1 receptor family. Forms a ternary complex with IL18 and IL18RAP. Within this complex, IL18R1 is involved in ligand-binding and IL18RAP in signaling leading to NF-kappa-B and JNK activation. Interacts with SLC12A3 in peritoneal macrophages; this interaction is increased by IL18 treatment. Post-translationally, N-glycosylated. N-linked glycosyl chains contribute to ligand recognition and intra-receptor interactions required for formation of an active ternary receptor complex. In terms of tissue distribution, highly expressed in leukocytes, spleen, lung. Also expressed, but at lower levels, in liver, small intestine, colon, prostate, thymus, placenta, and heart. Specifically coexpressed with IL18R1 in Th1 cells.

It is found in the membrane. The catalysed reaction is NAD(+) + H2O = ADP-D-ribose + nicotinamide + H(+). Functionally, within the IL18 receptor complex, responsible for the binding of the pro-inflammatory cytokine IL18, but not IL1A nor IL1B. Involved in IL18-mediated IFNG synthesis from T-helper 1 (Th1) cells. Contributes to IL18-induced cytokine production, either independently of SLC12A3, or as a complex with SLC12A3. This Homo sapiens (Human) protein is Interleukin-18 receptor 1.